A 523-amino-acid chain; its full sequence is 2-isopropylmalate synthase (523 aa).

Residues 5–267 (VIIFDTTLRD…HTRINHQEIW (263 aa)) form the Pyruvate carboxyltransferase domain. Mn(2+)-binding residues include aspartate 14, histidine 202, histidine 204, and asparagine 238. A regulatory domain region spans residues 392-523 (RLEYFSVQSG…QNKEHNQETV (132 aa)).

Belongs to the alpha-IPM synthase/homocitrate synthase family. LeuA type 1 subfamily. As to quaternary structure, homodimer. Requires Mn(2+) as cofactor.

The protein resides in the cytoplasm. It carries out the reaction 3-methyl-2-oxobutanoate + acetyl-CoA + H2O = (2S)-2-isopropylmalate + CoA + H(+). It participates in amino-acid biosynthesis; L-leucine biosynthesis; L-leucine from 3-methyl-2-oxobutanoate: step 1/4. In terms of biological role, catalyzes the condensation of the acetyl group of acetyl-CoA with 3-methyl-2-oxobutanoate (2-ketoisovalerate) to form 3-carboxy-3-hydroxy-4-methylpentanoate (2-isopropylmalate). The protein is 2-isopropylmalate synthase of Cronobacter sakazakii (strain ATCC BAA-894) (Enterobacter sakazakii).